A 316-amino-acid chain; its full sequence is Transaldolase (316 aa).

Lysine 132 functions as the Schiff-base intermediate with substrate in the catalytic mechanism.

It belongs to the transaldolase family. Type 1 subfamily. Homodimer.

Its subcellular location is the cytoplasm. The catalysed reaction is D-sedoheptulose 7-phosphate + D-glyceraldehyde 3-phosphate = D-erythrose 4-phosphate + beta-D-fructose 6-phosphate. It participates in carbohydrate degradation; pentose phosphate pathway; D-glyceraldehyde 3-phosphate and beta-D-fructose 6-phosphate from D-ribose 5-phosphate and D-xylulose 5-phosphate (non-oxidative stage): step 2/3. Functionally, transaldolase is important for the balance of metabolites in the pentose-phosphate pathway. The protein is Transaldolase of Methylobacillus flagellatus (strain ATCC 51484 / DSM 6875 / VKM B-1610 / KT).